The following is a 276-amino-acid chain: UPF0328 protein ECU08_2080 (276 aa).

The disordered stretch occupies residues 1-24; the sequence is MGIIDVQRSHLTATPSKERDAPAH.

This sequence belongs to the UPF0328 family.

The chain is UPF0328 protein ECU08_2080 from Encephalitozoon cuniculi (strain GB-M1) (Microsporidian parasite).